We begin with the raw amino-acid sequence, 358 residues long: NADH-quinone oxidoreductase subunit H (358 aa).

Transmembrane regions (helical) follow at residues 20 to 40, 95 to 115, 128 to 148, 168 to 188, 206 to 226, 253 to 273, 295 to 315, and 334 to 354; these read ITVGLVVSVIVKIVIILIPLI, ALFYIGPIMSLAPSFAAWAVI, IGLLYILMITSLSVYGVIIAG, ISYEIAMSAALVCVVMVSGSM, VFSWNWLPLFPIFIVYLISAV, GFAFALFFLAEYIFMILIAAL, TPSAFWMFVKMAAVLYWYLWI, and VLIPIGFAYIVVLGVWMISPL.

It belongs to the complex I subunit 1 family. NDH-1 is composed of 14 different subunits. Subunits NuoA, H, J, K, L, M, N constitute the membrane sector of the complex.

It localises to the cell inner membrane. The enzyme catalyses a quinone + NADH + 5 H(+)(in) = a quinol + NAD(+) + 4 H(+)(out). Functionally, NDH-1 shuttles electrons from NADH, via FMN and iron-sulfur (Fe-S) centers, to quinones in the respiratory chain. The immediate electron acceptor for the enzyme in this species is believed to be ubiquinone. Couples the redox reaction to proton translocation (for every two electrons transferred, four hydrogen ions are translocated across the cytoplasmic membrane), and thus conserves the redox energy in a proton gradient. This subunit may bind ubiquinone. The protein is NADH-quinone oxidoreductase subunit H of Neisseria gonorrhoeae (strain ATCC 700825 / FA 1090).